We begin with the raw amino-acid sequence, 154 residues long: Ribosome maturation factor RimP (154 aa).

It belongs to the RimP family.

The protein resides in the cytoplasm. Required for maturation of 30S ribosomal subunits. The chain is Ribosome maturation factor RimP from Ruthia magnifica subsp. Calyptogena magnifica.